Consider the following 75-residue polypeptide: Probable [Fe-S]-dependent transcriptional repressor (75 aa).

Positions 55, 60, 63, and 72 each coordinate iron-sulfur cluster.

This sequence belongs to the FeoC family.

In terms of biological role, may function as a transcriptional regulator that controls feoABC expression. This chain is Probable [Fe-S]-dependent transcriptional repressor, found in Serratia marcescens.